Reading from the N-terminus, the 491-residue chain is Acetyl-coenzyme A carboxylase carboxyl transferase subunit beta, chloroplastic (491 aa).

Positions 26 to 49 (ARPRPIGNTNGSQDPSINDRDKNG) are disordered. Over residues 32–41 (GNTNGSQDPS) the composition is skewed to polar residues. Residues 222 to 491 (LWVQCDNCYG…PLNHNSQVKR (270 aa)) enclose the CoA carboxyltransferase N-terminal domain. Zn(2+) contacts are provided by Cys-226, Cys-229, Cys-245, and Cys-248. Residues 226-248 (CDNCYGLNYKKIFSSKMNICEQC) form a C4-type zinc finger.

This sequence belongs to the AccD/PCCB family. As to quaternary structure, acetyl-CoA carboxylase is a heterohexamer composed of biotin carboxyl carrier protein, biotin carboxylase and 2 subunits each of ACCase subunit alpha and ACCase plastid-coded subunit beta (accD). The cofactor is Zn(2+).

It is found in the plastid. The protein resides in the chloroplast stroma. It catalyses the reaction N(6)-carboxybiotinyl-L-lysyl-[protein] + acetyl-CoA = N(6)-biotinyl-L-lysyl-[protein] + malonyl-CoA. Its pathway is lipid metabolism; malonyl-CoA biosynthesis; malonyl-CoA from acetyl-CoA: step 1/1. Its function is as follows. Component of the acetyl coenzyme A carboxylase (ACC) complex. Biotin carboxylase (BC) catalyzes the carboxylation of biotin on its carrier protein (BCCP) and then the CO(2) group is transferred by the transcarboxylase to acetyl-CoA to form malonyl-CoA. This chain is Acetyl-coenzyme A carboxylase carboxyl transferase subunit beta, chloroplastic, found in Ceratophyllum demersum (Rigid hornwort).